Consider the following 119-residue polypeptide: Nascent polypeptide-associated complex protein (119 aa).

The NAC-A/B domain occupies 5–73 (RMNSREMRRL…MREVPKEPEE (69 aa)).

This sequence belongs to the NAC-alpha family. Homodimer. Interacts with the ribosome. Binds ribosomal RNA.

In terms of biological role, contacts the emerging nascent chain on the ribosome. The sequence is that of Nascent polypeptide-associated complex protein from Thermoplasma acidophilum (strain ATCC 25905 / DSM 1728 / JCM 9062 / NBRC 15155 / AMRC-C165).